A 254-amino-acid chain; its full sequence is Type III pantothenate kinase (254 aa).

ATP is bound at residue 6–13 (DVGNTNTT). Substrate is bound by residues Tyr-100 and 107–110 (GADR). Asp-109 (proton acceptor) is an active-site residue. Residue Asp-129 participates in K(+) binding. Thr-132 provides a ligand contact to ATP. Thr-184 lines the substrate pocket.

It belongs to the type III pantothenate kinase family. Homodimer. Requires NH4(+) as cofactor. It depends on K(+) as a cofactor.

It localises to the cytoplasm. The enzyme catalyses (R)-pantothenate + ATP = (R)-4'-phosphopantothenate + ADP + H(+). It participates in cofactor biosynthesis; coenzyme A biosynthesis; CoA from (R)-pantothenate: step 1/5. Catalyzes the phosphorylation of pantothenate (Pan), the first step in CoA biosynthesis. The chain is Type III pantothenate kinase from Anaeromyxobacter dehalogenans (strain 2CP-C).